A 446-amino-acid chain; its full sequence is Glutamine synthetase (446 aa).

A GS beta-grasp domain is found at 15–102 (RDIRFVRLWF…MFCDITMPDG (88 aa)). Positions 109–446 (SRHVLRRQLA…PYELKNYLSL (338 aa)) constitute a GS catalytic domain. 2 residues coordinate Mg(2+): Glu-132 and Glu-134. Glu-184 lines the ATP pocket. Residues Glu-189 and Glu-196 each contribute to the Mg(2+) site. Position 241 (Gly-241) interacts with L-glutamate. Residue His-245 participates in Mg(2+) binding. ATP contacts are provided by residues 247–249 (HMS) and Ser-249. Positions 298, 304, and 316 each coordinate L-glutamate. The ATP site is built by Arg-316 and Arg-321. A Mg(2+)-binding site is contributed by Glu-336. Arg-338 lines the L-glutamate pocket. Residue Lys-363 forms an Isoglutamyl lysine isopeptide (Lys-Gln) (interchain with Q-Cter in protein Pup) linkage.

Belongs to the glutamine synthetase family. Oligomer of 12 subunits arranged in the form of two hexagons. In its feedback-inhibited form, interacts with TnrA in order to block its DNA-binding activity. Requires Mg(2+) as cofactor.

The protein resides in the cytoplasm. It catalyses the reaction L-glutamate + NH4(+) + ATP = L-glutamine + ADP + phosphate + H(+). With respect to regulation, inhibited by glutamine. In terms of biological role, glutamine synthetase (GS) is an unusual multitasking protein that functions as an enzyme, a transcription coregulator, and a chaperone in ammonium assimilation and in the regulation of genes involved in nitrogen metabolism. It catalyzes the ATP-dependent biosynthesis of glutamine from glutamate and ammonia. Feedback-inhibited GlnA also interacts with and regulates the activity of the transcriptional regulator TnrA. During nitrogen limitation, TnrA is in its DNA-binding active state and turns on the transcription of genes required for nitrogen assimilation. Under conditions of nitrogen excess, feedback-inhibited GlnA forms a stable complex with TnrA, which inhibits its DNA-binding activity. In contrast, feedback-inhibited GlnA acts as a chaperone to stabilize the DNA-binding activity of GlnR, which represses the transcription of nitrogen assimilation genes. The sequence is that of Glutamine synthetase from Mycolicibacterium smegmatis (strain ATCC 700084 / mc(2)155) (Mycobacterium smegmatis).